A 238-amino-acid polypeptide reads, in one-letter code: ATP synthase subunit a (238 aa).

5 consecutive transmembrane segments (helical) span residues 17–37 (LSNI…AIIC), 75–95 (FHVL…LGLP), 112–132 (DPIV…YYGI), 172–192 (YGNI…LAHI), and 194–214 (IFVG…SLFI).

This sequence belongs to the ATPase A chain family. As to quaternary structure, F-type ATPases have 2 components, CF(1) - the catalytic core - and CF(0) - the membrane proton channel. CF(1) has five subunits: alpha(3), beta(3), gamma(1), delta(1), epsilon(1). CF(0) has three main subunits: a(1), b(2) and c(9-12). The alpha and beta chains form an alternating ring which encloses part of the gamma chain. CF(1) is attached to CF(0) by a central stalk formed by the gamma and epsilon chains, while a peripheral stalk is formed by the delta and b chains.

It localises to the cell membrane. Its function is as follows. Key component of the proton channel; it plays a direct role in the translocation of protons across the membrane. This is ATP synthase subunit a from Listeria monocytogenes serovar 1/2a (strain ATCC BAA-679 / EGD-e).